The sequence spans 249 residues: MEELELPLPTEKLAVDPGREGGKRGVAVLVATGSFNPPTYMHLRMFELAKDELQQRGYSVLGGYMSPVNDAYKKKGLLSAAHRIRLCELACESSSFVMVDRWEAMQKGFQRTLTVLSRIRNALSKDGLADGGSPNVMLLCGSDLLESFSTPGVWIPDQVRIICKDFGVICIRREGKDVEKIISSSEILNECRDNIISVDEIVPNQISSSRVRECIKKCLSIKYLVCDEVIQYIGEHKLYKEADGSDTRK.

Ser-34 and Phe-35 together coordinate NAD(+). His-42 and Lys-75 together coordinate ATP. NAD(+) is bound by residues Thr-112, Gly-141, Asp-143, Trp-154, Arg-173, and Asn-204. 209–210 (SR) serves as a coordination point for ATP.

Belongs to the eukaryotic NMN adenylyltransferase family. A divalent metal cation is required as a cofactor.

It catalyses the reaction beta-nicotinamide D-ribonucleotide + ATP + H(+) = diphosphate + NAD(+). It carries out the reaction nicotinate beta-D-ribonucleotide + ATP + H(+) = deamido-NAD(+) + diphosphate. It functions in the pathway cofactor biosynthesis; NAD(+) biosynthesis; deamido-NAD(+) from nicotinate D-ribonucleotide: step 1/1. The protein operates within cofactor biosynthesis; NAD(+) biosynthesis; NAD(+) from nicotinamide D-ribonucleotide: step 1/1. Its function is as follows. Catalyzes the formation of NAD(+) from nicotinamide mononucleotide (NMN) and ATP. Can also use the deamidated form; nicotinic acid mononucleotide (NaMN) as substrate. This is Nicotinamide/nicotinic acid mononucleotide adenylyltransferase from Oryza sativa subsp. japonica (Rice).